The sequence spans 187 residues: Rusticyanin (187 aa).

The N-terminal stretch at 1-32 is a signal peptide; sequence MYTQNTMKKNWYVTVGAAAALAATVGMGTAMA. The region spanning 85–187 is the Plastocyanin-like domain; that stretch reads SFEVHDKKNP…TGMFGKIIVK (103 aa). Positions 117, 170, 175, and 180 each coordinate Cu cation.

Monomer. Cu cation is required as a cofactor.

The protein resides in the periplasm. In terms of biological role, electron carrier from cytochrome c552 to the A-type oxidase. The polypeptide is Rusticyanin (rus) (Acidithiobacillus ferridurans).